The chain runs to 359 residues: Phospho-N-acetylmuramoyl-pentapeptide-transferase (359 aa).

A run of 10 helical transmembrane segments spans residues 3 to 23 (LILIAVGIALAVSILLTPALI), 55 to 75 (VAILAGIWAGYLGSHLVGMAM), 80 to 100 (PSASGLLVLGLATVLGGVGFI), 117 to 137 (TAKTVGQLFAAVLFGVLALQF), 156 to 176 (IATVTLAPALFVLFCVVVVSA), 187 to 207 (LDGLAAGAMAMVTAAYVLITF), 231 to 251 (LALVAAATAGACVGFLWWNAA), 255 to 275 (IFMGDTGSLALGGIIAGISVT), 280 to 300 (ILAVVLGALFVAEVTSVVVQI), and 334 to 354 (FWLLTAIACGLGVALFYGEWL).

The protein belongs to the glycosyltransferase 4 family. MraY subfamily. The cofactor is Mg(2+).

Its subcellular location is the cell membrane. The catalysed reaction is UDP-N-acetyl-alpha-D-muramoyl-L-alanyl-gamma-D-glutamyl-meso-2,6-diaminopimeloyl-D-alanyl-D-alanine + di-trans,octa-cis-undecaprenyl phosphate = di-trans,octa-cis-undecaprenyl diphospho-N-acetyl-alpha-D-muramoyl-L-alanyl-D-glutamyl-meso-2,6-diaminopimeloyl-D-alanyl-D-alanine + UMP. It functions in the pathway cell wall biogenesis; peptidoglycan biosynthesis. In terms of biological role, catalyzes the initial step of the lipid cycle reactions in the biosynthesis of the cell wall peptidoglycan: transfers peptidoglycan precursor phospho-MurNAc-pentapeptide from UDP-MurNAc-pentapeptide onto the lipid carrier undecaprenyl phosphate, yielding undecaprenyl-pyrophosphoryl-MurNAc-pentapeptide, known as lipid I. The protein is Phospho-N-acetylmuramoyl-pentapeptide-transferase of Mycolicibacterium smegmatis (strain ATCC 700084 / mc(2)155) (Mycobacterium smegmatis).